The primary structure comprises 399 residues: Pre-mycofactocin synthase (399 aa).

Residues Ala4–Gly386 form the FMN hydroxy acid dehydrogenase domain. Positions 111 and 131 each coordinate FMN. Residue Tyr133 participates in a 2-oxocarboxylate binding. Residue Thr159 participates in FMN binding. Residue Arg168 participates in a 2-oxocarboxylate binding. Lys257 is an FMN binding site. His281 functions as the Proton acceptor in the catalytic mechanism. Residues Asp312–Arg316 and Gly335–Arg336 each bind FMN.

It belongs to the FMN-dependent alpha-hydroxy acid dehydrogenase family. Requires FMN as cofactor.

The enzyme catalyses 3-amino-5-[(4-hydroxyphenyl)methyl]-4,4-dimethyl-2-pyrrolidin-2-one + O2 + H2O = pre-mycofactocin + H2O2 + NH4(+). Functionally, involved in the biosynthesis of the enzyme cofactor mycofactocin (MFT). Catalyzes the oxidative deamination of AHDP (3-amino-5-[(4-hydroxyphenyl)methyl]-4,4-dimethyl-2-pyrrolidin-2-one), forming an alpha-keto amide moiety on the resulting molecule, which is called pre-mycofactocin (PMFT). This reaction occurs via a 5-[(4-hydroxyphenyl)methyl]-3-imino-4,4-dimethylpyrrolidin-2-one intermediate, which converts to PMFT. The alpha-keto amide moiety is the redox-active center for the redox activity of mycofactocin. Is required for the in vivo ethanol assimilation in M.smegmatis. The polypeptide is Pre-mycofactocin synthase (Mycolicibacterium smegmatis (strain ATCC 700084 / mc(2)155) (Mycobacterium smegmatis)).